Here is a 321-residue protein sequence, read N- to C-terminus: Fibronectin type III domain-containing protein 8 (321 aa).

Residues Val-175 to Thr-277 form the Fibronectin type-III domain.

In Bos taurus (Bovine), this protein is Fibronectin type III domain-containing protein 8 (FNDC8).